The following is a 452-amino-acid chain: Regulator of nonsense transcripts 3A (452 aa).

Composition is skewed to basic and acidic residues over residues 205-363 (RIRE…DRAK) and 376-401 (TGDKLGKEDREDMGSRKERIRNKDRP). The tract at residues 205–452 (RIREEKREER…GTGSEKSADE (248 aa)) is disordered.

It belongs to the RENT3 family.

It is found in the nucleus. It localises to the cytoplasm. Involved in nonsense-mediated decay (NMD) of mRNAs containing premature stop codons by associating with the nuclear exon junction complex (EJC) and serving as link between the EJC core and NMD machinery. Recruits UPF2 at the cytoplasmic side of the nuclear envelope and the subsequent formation of an UPF1-UPF2-UPF3 surveillance complex (including UPF1 bound to release factors at the stalled ribosome) is believed to activate NMD. Binds spliced mRNA upstream of exon-exon junctions. This chain is Regulator of nonsense transcripts 3A, found in Danio rerio (Zebrafish).